A 311-amino-acid polypeptide reads, in one-letter code: Ribonuclease HIII (311 aa).

Residues 93-310 (LSAIGSDEVG…TKKALDIAKH (218 aa)) form the RNase H type-2 domain. A divalent metal cation is bound by residues Asp99, Glu100, and Asp204.

The protein belongs to the RNase HII family. RnhC subfamily. The cofactor is Mn(2+). Mg(2+) serves as cofactor.

The protein localises to the cytoplasm. The catalysed reaction is Endonucleolytic cleavage to 5'-phosphomonoester.. Functionally, endonuclease that specifically degrades the RNA of RNA-DNA hybrids. This chain is Ribonuclease HIII, found in Geobacillus kaustophilus (strain HTA426).